The primary structure comprises 343 residues: MPAKVLINGYGSIGKRVADAVSMQDDMEVIGVTKTKPDFEARLAVEKGYKLFVAIPDNERVKLFEDAGIPVEGTILDIIEDADIVVDGAPKKIGKQNLENIYKPHKVKAILQGGEKAKDVEDNFNALWSYNRCYGKDYVRVVSCNTTGLCRILYAINSIADIKKARIVLVRRAADPNDDKTGPVNAITPNPVTVPSHHGPDVVSVVPEFEGKILTSAVIVPTTLMHMHTLMVEVDGDVSRDDILEAIKKTPRIITVRAEDGFSSTAKIIEYGRDLGRLRYDINELVVWEESINVLENEIFLMQAVHQESIVIPENIDCIRAMLQMEEDNFKSIEKTNKAMGIQ.

Residues 12–13 (SI) and G114 each bind NAD(+). Position 143 to 145 (143 to 145 (SCN)) interacts with D-glyceraldehyde 3-phosphate. The active-site Nucleophile is C144. R172 provides a ligand contact to NAD(+). 198 to 199 (HG) is a binding site for D-glyceraldehyde 3-phosphate. Q307 provides a ligand contact to NAD(+).

It belongs to the glyceraldehyde-3-phosphate dehydrogenase family. Homotetramer.

It is found in the cytoplasm. It carries out the reaction D-glyceraldehyde 3-phosphate + phosphate + NADP(+) = (2R)-3-phospho-glyceroyl phosphate + NADPH + H(+). The catalysed reaction is D-glyceraldehyde 3-phosphate + phosphate + NAD(+) = (2R)-3-phospho-glyceroyl phosphate + NADH + H(+). The protein operates within carbohydrate degradation; glycolysis; pyruvate from D-glyceraldehyde 3-phosphate: step 1/5. In Methanocaldococcus jannaschii (strain ATCC 43067 / DSM 2661 / JAL-1 / JCM 10045 / NBRC 100440) (Methanococcus jannaschii), this protein is Glyceraldehyde-3-phosphate dehydrogenase (gap).